Consider the following 1164-residue polypeptide: WASH complex subunit 5 (1164 aa).

It belongs to the strumpellin family. Probable component of the WASH complex.

The chain is WASH complex subunit 5 from Dictyostelium discoideum (Social amoeba).